A 506-amino-acid polypeptide reads, in one-letter code: Maturase K (506 aa).

The protein belongs to the intron maturase 2 family. MatK subfamily.

The protein resides in the plastid. It localises to the chloroplast. Functionally, usually encoded in the trnK tRNA gene intron. Probably assists in splicing its own and other chloroplast group II introns. The sequence is that of Maturase K from Lathyrus tingitanus (Tangier pea).